The chain runs to 698 residues: Methionine synthase reductase (698 aa).

Residues 5–147 enclose the Flavodoxin-like domain; sequence LLLYATQQGQ…VVEPWIAGLW (143 aa). Residue 93-124 participates in FMN binding; that stretch reads LLGLGDSEYTYFCNGGKIIDKRLQELGARHFY. Residues 166-247 form a hinge region; that stretch reads ALPVASPASS…ASLNIPGLPP (82 aa). Residues Ser-171 and Ser-189 each carry the phosphoserine modification. An FAD-binding FR-type domain is found at 271-533; it reads DPVFQVPISK…PRTTNSFHLP (263 aa). Residue Lys-291 participates in NADP(+) binding. FAD contacts are provided by residues 451-454 and 487-490; these read RPYS and GVCT. NADP(+) is bound by residues 610 to 611, 624 to 626, and Asp-659; these read SR and YVQ. An FAD-binding site is contributed by Trp-697.

As to quaternary structure, forms a multiprotein complex with MMACHC, MMADHC and MTR. FAD serves as cofactor. The cofactor is FMN. Found in all tissues tested, particularly abundant in skeletal muscle.

Its subcellular location is the cytoplasm. It carries out the reaction 2 methylcob(III)alamin-[methionine synthase] + 2 S-adenosyl-L-homocysteine + NADP(+) + H(+) = 2 cob(II)alamin-[methionine synthase] + 2 S-adenosyl-L-methionine + NADPH. The enzyme catalyses 2 cob(II)alamin + A + 2 H2O + 2 H(+) = 2 aquacob(III)alamin + AH2. Functionally, key enzyme in methionine and folate homeostasis responsible for the reactivation of methionine synthase (MTR/MS) activity by catalyzing the reductive methylation of MTR-bound cob(II)alamin. Cobalamin (vitamin B12) forms a complex with MTR to serve as an intermediary in methyl transfer reactions that cycles between MTR-bound methylcob(III)alamin and MTR bound-cob(I)alamin forms, and occasional oxidative escape of the cob(I)alamin intermediate during the catalytic cycle leads to the inactive cob(II)alamin species. The processing of cobalamin in the cytosol occurs in a multiprotein complex composed of at least MMACHC, MMADHC, MTRR and MTR which may contribute to shuttle safely and efficiently cobalamin towards MTR in order to produce methionine. Also necessary for the utilization of methyl groups from the folate cycle, thereby affecting transgenerational epigenetic inheritance. Also acts as a molecular chaperone for methionine synthase by stabilizing apoMTR and incorporating methylcob(III)alamin into apoMTR to form the holoenzyme. Also serves as an aquacob(III)alamin reductase by reducing aquacob(III)alamin to cob(II)alamin; this reduction leads to stimulation of the conversion of apoMTR and aquacob(III)alamin to MTR holoenzyme. This chain is Methionine synthase reductase, found in Homo sapiens (Human).